Reading from the N-terminus, the 114-residue chain is MSFRESDILITTAQELPGYKIVEVKGVVIGITVRSRGLGGNIAASFRSLIGGEIKEYVEMAEQARMQALERMIERAKALGANAVISVRFDSNELAQNMDEIIAYGTAVVVTKSI.

It belongs to the UPF0145 family.

The polypeptide is UPF0145 protein STK_10800 (Sulfurisphaera tokodaii (strain DSM 16993 / JCM 10545 / NBRC 100140 / 7) (Sulfolobus tokodaii)).